The primary structure comprises 222 residues: Charged multivesicular body protein 4b (222 aa).

Disordered stretches follow at residues 1–21 (MSLI…PSPQ) and 177–222 (NLLE…WATA). Residues 21-182 (QEAIQKLRDT…ELDKNLLEVQ (162 aa)) adopt a coiled-coil conformation.

It belongs to the SNF7 family. As to quaternary structure, probable core component of the endosomal sorting required for transport complex III (ESCRT-III). ESCRT-III components are thought to multimerize to form a flat lattice on the perimeter membrane of the endosome.

The protein resides in the cytoplasm. It is found in the cytosol. Its subcellular location is the late endosome membrane. It localises to the midbody. Its function is as follows. Probable core component of the endosomal sorting required for transport complex III (ESCRT-III) which is involved in multivesicular bodies (MVBs) formation and sorting of endosomal cargo proteins into MVBs. MVBs contain intraluminal vesicles (ILVs) that are generated by invagination and scission from the limiting membrane of the endosome and mostly are delivered to lysosomes enabling degradation of membrane proteins, such as stimulated growth factor receptors, lysosomal enzymes and lipids. The protein is Charged multivesicular body protein 4b (chmp4b) of Xenopus laevis (African clawed frog).